Reading from the N-terminus, the 123-residue chain is MPTINQLIASPRVLQKSRKKVPALQQSPQKRGVCTRVYTTTPKKPNSALRKVAKVRLTNGFEVIGYIPGEGHNLQEHSVVMIRGGRVKDLPGVRYHILRGVLDTQGVKNRKQRRSKYGAKRPK.

D89 is subject to 3-methylthioaspartic acid.

The protein belongs to the universal ribosomal protein uS12 family. As to quaternary structure, part of the 30S ribosomal subunit. Contacts proteins S8 and S17. May interact with IF1 in the 30S initiation complex.

With S4 and S5 plays an important role in translational accuracy. In terms of biological role, interacts with and stabilizes bases of the 16S rRNA that are involved in tRNA selection in the A site and with the mRNA backbone. Located at the interface of the 30S and 50S subunits, it traverses the body of the 30S subunit contacting proteins on the other side and probably holding the rRNA structure together. The combined cluster of proteins S8, S12 and S17 appears to hold together the shoulder and platform of the 30S subunit. In Nitrobacter winogradskyi (strain ATCC 25391 / DSM 10237 / CIP 104748 / NCIMB 11846 / Nb-255), this protein is Small ribosomal subunit protein uS12.